Here is a 1577-residue protein sequence, read N- to C-terminus: High molecular weight form of myosin-1 (1577 aa).

One can recognise a Myosin motor domain in the interval 75-751 (KSVDDLVQMD…EQRGLELQRN (677 aa)). N6,N6,N6-trimethyllysine is present on K119. 168–175 (GESGAGKT) contributes to the ATP binding site. Actin-binding stretches follow at residues 628 to 650 (LDSLMTALNATEPHYIRCIKPNS) and 730 to 744 (QVGKTRVLYRAPEQR). The IQ domain occupies 755 to 782 (ERVTIQIQAGVRRMFARRLYKRMRAIKP). One can recognise a MyTH4 domain in the interval 1261–1401 (WTKSPIPTSL…PNVEQILAAK (141 aa)). 2 disordered regions span residues 1442 to 1466 (SRPAQARAQPGQQAQPAGAARQQAA) and 1483 to 1516 (QQQQQQQGYDQQQQAYGGGADYGQQQQQQDLPAE). Low complexity-rich tracts occupy residues 1444-1466 (PAQARAQPGQQAQPAGAARQQAA) and 1483-1497 (QQQQQQQGYDQQQQA). Residues 1519 to 1577 (EEYKQVEVVYDYDGGGDAQRLVLVKGAIITVIKEYEGWAYGSTDDGQVGLYPINYTRPI) enclose the SH3 domain.

Belongs to the TRAFAC class myosin-kinesin ATPase superfamily. Myosin family. As to quaternary structure, myosin I heavy chain is single-headed.

This is High molecular weight form of myosin-1 from Acanthamoeba castellanii (Amoeba).